The primary structure comprises 262 residues: MFDRTWHISRFLLEYGADVNIKNRYGSTPLFEAICNCSCKNVKLFLENNADINEVDLDGDATLMKIFNYNCRIHSGLNSVHLRIARIVIPYLKVIGLKNKHVKNVHAYKQNINFFNSVKQLRLISDESDREINRMKNTILRKNKFGNDITMYDILLEKNMNQLVQIIKNPLIKKRCSELILFKRIVKNNIIYIENRYQKIHGANTVIEFYQYEYTDKWMILPQEIKINILCYLDNKELDYIYESSLENNKNNTSDKKYDVCC.

One copy of the ANK repeat lies at 25–54 (YGSTPLFEAICNCSCKNVKLFLENNADINE).

This is Putative ankyrin repeat protein FPV243 from Vertebrata (FPV).